The chain runs to 37 residues: Large ribosomal subunit protein bL36 (37 aa).

This sequence belongs to the bacterial ribosomal protein bL36 family.

The sequence is that of Large ribosomal subunit protein bL36 from Gloeothece citriformis (strain PCC 7424) (Cyanothece sp. (strain PCC 7424)).